The chain runs to 114 residues: Thioredoxin H1 (114 aa).

The residue at position 2 (A2) is an N-acetylalanine. One can recognise a Thioredoxin domain in the interval 2-114 (ASEEGQVIAC…LQSTIAKHLA (113 aa)). Active-site nucleophile residues include C40 and C43. An intrachain disulfide couples C40 to C43.

This sequence belongs to the thioredoxin family. Plant H-type subfamily. Interacts with FBA6. Interacts with MDH1.

The protein localises to the cytoplasm. In terms of biological role, thiol-disulfide oxidoreductase involved in the redox regulation of a number of cytosolic enzymes. Activates the cytosolic malate dehydrogenase (MDH) probably by reducing an interchain disulfide bond of the inactive MDH homodimer. Possesses insulin disulfide bonds reducing activity. This Arabidopsis thaliana (Mouse-ear cress) protein is Thioredoxin H1 (TRX1).